A 141-amino-acid polypeptide reads, in one-letter code: Ribonuclease P protein component (141 aa).

This sequence belongs to the RnpA family. In terms of assembly, consists of a catalytic RNA component (M1 or rnpB) and a protein subunit.

The catalysed reaction is Endonucleolytic cleavage of RNA, removing 5'-extranucleotides from tRNA precursor.. Its function is as follows. RNaseP catalyzes the removal of the 5'-leader sequence from pre-tRNA to produce the mature 5'-terminus. It can also cleave other RNA substrates such as 4.5S RNA. The protein component plays an auxiliary but essential role in vivo by binding to the 5'-leader sequence and broadening the substrate specificity of the ribozyme. The polypeptide is Ribonuclease P protein component (Onion yellows phytoplasma (strain OY-M)).